A 78-amino-acid chain; its full sequence is HssA/B-like protein 30 (78 aa).

The interval 1–32 (MTLFSSITSISKTNTSSKSSVNSLSGSSLSMG) is disordered.

Belongs to the hssA/B family.

This is HssA/B-like protein 30 (hssl30) from Dictyostelium discoideum (Social amoeba).